Here is a 190-residue protein sequence, read N- to C-terminus: CASP-like protein 1U3 (190 aa).

Residues 1–24 lie on the Cytoplasmic side of the membrane; the sequence is MNGATVQPSYKEAGPVRYHPMHDC. Residues 25–45 form a helical membrane-spanning segment; it reads LSLILRLLTLGATIAAIVAML. Over 46-70 the chain is Extracellular; it reads KSTQTVPTLLGPHTARWKDFPAFEW. A helical membrane pass occupies residues 71 to 91; that stretch reads FVIGNSIVLVYAALGTLAACL. Over 92–113 the chain is Cytoplasmic; that stretch reads SLFTRRGPLSYTKTAWLTFLCD. Residues 114 to 134 traverse the membrane as a helical segment; it reads FICSCALISAGSTALGVAWIG. The Extracellular portion of the chain corresponds to 135 to 158; that stretch reads KHGQHSAFWNAVCPTVDRFCDYVQ. Residues 159–179 form a helical membrane-spanning segment; that stretch reads GALIATLCGFIFQALSTVIAA. At 180–190 the chain is on the cytoplasmic side; the sequence is SALHNLATHRH.

It belongs to the Casparian strip membrane proteins (CASP) family. In terms of assembly, homodimer and heterodimers.

The protein localises to the cell membrane. This chain is CASP-like protein 1U3, found in Physcomitrium patens (Spreading-leaved earth moss).